The chain runs to 1671 residues: MSSVKVAVRVRPFNSREIGRESKCIIEMTGATTAITNPKVPPNTSEAVKRFNFDYSYWSHDPRDSDFSTQTMVYKDIGEEMLQHSFDGYNVCIFAYGQTGAGKSYTMMGRQEEQQEGIIPMICQDLFTRIHDTETDELKYSVEVSYMEIYCERVRDLLNPKNKGNLRVREHPLLGPYVEDLSKLAVTDYQDIHDLIDEGNKARTVAATNMNETSSRSHAVFTIFFTQRRHDTMTDLTTEKVSKISLVDLAGSERADSTGAKGTRLKEGANINKSLTTLGKVISALAEVASKKKHNKKADFIPYRDSALTWLLRENLGGNSKTAMIAAISPADINYDETLSTLRYADRAKQIVCKAVVNEDANAKLIRELKEEIQKLRDLLKAEGIEVQEEDELNKSTTGIKSPSKSRNRNGSTTEMAVDQLQASEKLIAELNETWEEKLKRTEEIRLQREAVFAEMGVAVKEDGITVGVFSPKKTPHLVNLNEDPNLSECLLYYIKDGLTRLGTHEANVPQDIQLSGSHILKEHCTFENRNSTVTLLPHKDAIIFVNGRQLVEPEVLKTGSRVILGKNHVFRFTNPEQARELREKITENEAENEVEKADAPQVDWNFAQCELLEKQGIDLKAEMKKRLDNLEEQYKREKMQADQQFEEQRKTYEARIDALQKQVEEQSMTMSMYSSYSPEDFHQEEDVYNNPMYESCWTAREAGLAAWAFRKWRYHQFTSLRDDLWGNAIFLKEANAISVELKKKVQFQFTLLTDTLYSPLPPELASSVAPLQQEDEFGAPPVSKTLVAVEVTDTKNGATHYWSLEKLRQRLELMREMYHNEAEMSPTSPDYNVESLTGGDPFYDRFPWFRMVGRSFIYLSNLLYPVPLVHKVAIVNERGDVRGYLRIAVQPVLDEESIDFNNGVKQSARLVFNEDDAKPKYRALNEKDDVQRYIDNGGHDSKLEELEDVDSGRGIDSNSASDCPENAEEPGEHLQVGKEFTFRVTVLQATGIGAEYADIFCQFNFLHRHEEAFSTEPVKNSASGAPLGFYHVQNITVPVTKSFIEYLKTQPIMFKIFGHYQTHPLHKDAKQDFVSRPPPRRMLPPSIPISQPVRSPKFGPLPCPPSSTVLAKHDVLVWFEICELAPNGEYVPSVVEHSDDLPCRGLFLLHQGIQRRIRITIVHEPTPEVKWKDINELVVGRIRNTPESSDEQDEDACVLSLGLFPGEVLDVPGDDRSFYRFEAAWDSSLHNSALLNRVSQGGETIYITLSAYLELENCARPAIVTKDLSMVIYGRDARTGPRSLKHLFSGQYRNPEANRLSGVYELSLRRASEAGSPGVQRRQRRVLDTSSTYVRGEENLHGWRPRGDSLIFDHQWELEKLTRLEEVGRMRHLLLLRERLGMDTNPNPTTKTEKDVCNLAARAATSPVHMVIPQSPQTPVKDPQQIMPEREYNQREQDLMLKCLKLVQAGRYAKNEANDTQTQSDVSPSDEGCADMTVSCISSNSMEDNKFVIRRRLCSPDRADAPNGWEAPAPATQPALPLRLYVPELEEIRVSPVVARKGLLNVLEHGGSGWKKRWVTVRRPYVFIYRSEKDPVERAVLNLATAQVECSEDQAAMVKIPNTFSVVTKHRGYLLQTLGDKEVHDWLYAINPLLAGQIKSRLARRTLEPASQTASQIQASSAANANSANK.

One can recognise a Kinesin motor domain in the interval 3–351 (SVKVAVRVRP…LRYADRAKQI (349 aa)). 97 to 104 (GQTGAGKS) is a binding site for ATP. Residues 358–437 (NEDANAKLIR…IAELNETWEE (80 aa)) are a coiled coil. The tract at residues 391-413 (DELNKSTTGIKSPSKSRNRNGST) is disordered. Residues 395 to 413 (KSTTGIKSPSKSRNRNGST) show a composition bias toward polar residues. Positions 500-566 (TRLGTHEANV…LKTGSRVILG (67 aa)) constitute an FHA domain. A coiled-coil region spans residues 577–674 (EQARELREKI…EEQSMTMSMY (98 aa)). The disordered stretch occupies residues 949–973 (DVDSGRGIDSNSASDCPENAEEPGE). In terms of domain architecture, PH spans 1538-1636 (VVARKGLLNV…WLYAINPLLA (99 aa)).

This sequence belongs to the TRAFAC class myosin-kinesin ATPase superfamily. Kinesin family. Unc-104 subfamily. In terms of assembly, monomer.

The protein resides in the cytoplasm. The protein localises to the cytoskeleton. Functionally, required for presynaptic maturation, has a role in axonal transport of dense-core vesicles carrying synaptic vesicle precursors, components required for the morphological transformation of axonal growth cones to mature boutons. The polypeptide is Kinesin-like protein unc-104 (Drosophila pseudoobscura pseudoobscura (Fruit fly)).